A 358-amino-acid chain; its full sequence is Phospho-N-acetylmuramoyl-pentapeptide-transferase (358 aa).

10 helical membrane passes run A28–L48, T70–A90, L92–F112, M133–Y153, V165–S185, G196–T216, V233–F253, V260–L280, L285–V305, and K335–L355.

It belongs to the glycosyltransferase 4 family. MraY subfamily. Mg(2+) is required as a cofactor.

The protein resides in the cell inner membrane. It carries out the reaction UDP-N-acetyl-alpha-D-muramoyl-L-alanyl-gamma-D-glutamyl-meso-2,6-diaminopimeloyl-D-alanyl-D-alanine + di-trans,octa-cis-undecaprenyl phosphate = di-trans,octa-cis-undecaprenyl diphospho-N-acetyl-alpha-D-muramoyl-L-alanyl-D-glutamyl-meso-2,6-diaminopimeloyl-D-alanyl-D-alanine + UMP. It functions in the pathway cell wall biogenesis; peptidoglycan biosynthesis. In terms of biological role, catalyzes the initial step of the lipid cycle reactions in the biosynthesis of the cell wall peptidoglycan: transfers peptidoglycan precursor phospho-MurNAc-pentapeptide from UDP-MurNAc-pentapeptide onto the lipid carrier undecaprenyl phosphate, yielding undecaprenyl-pyrophosphoryl-MurNAc-pentapeptide, known as lipid I. The chain is Phospho-N-acetylmuramoyl-pentapeptide-transferase from Desulfovibrio desulfuricans (strain ATCC 27774 / DSM 6949 / MB).